We begin with the raw amino-acid sequence, 423 residues long: MTDVIDAKPEEAKKVPPEVEDEDSGDESAPEASAAGGEATKKKKKKKKPKKKKKAAEQSEPPRVGLSKLFPNGIYPEGEIQPYKDDNAYRTTSEEKRYLERITCEDPDETYQNIRKGAEVHRQVRQYAQRTIKPGMTMTEIANLIEDGTRALVEENGLEAGIGFPTGLSLNNCAAHYTPNAGDTIVLQQGDVMKVDIGVQVKGRIVDSAFTMTFEPTYDKLLEAVRAATNTGIREAGIDARLGEIAGAIQETMESYEVEVNGKLIPVKPIANLSGHSIDRYTIHAGKSVCLVKNDDQTKMEEGEYFAIETFGSTGRGRVVDGGECSHYARKVDAPHVPLRLTTAKSLLKSINKNFGTIPFCRRYLDRIGESKYLLALNHLVQQGIVEDYPPLYDQQGSMTAQFEHTILLRPTVKEVVSRGDDY.

A compositionally biased stretch (basic and acidic residues) spans 1 to 17 (MTDVIDAKPEEAKKVPP). Residues 1–89 (MTDVIDAKPE…IQPYKDDNAY (89 aa)) form a disordered region. Over residues 18–29 (EVEDEDSGDESA) the composition is skewed to acidic residues. The segment covering 41–54 (KKKKKKKKPKKKKK) has biased composition (basic residues). Histidine 176 is a binding site for substrate. Residues aspartate 196, aspartate 207, and histidine 276 each coordinate a divalent metal cation. Histidine 284 provides a ligand contact to substrate. Positions 309 and 404 each coordinate a divalent metal cation.

This sequence belongs to the peptidase M24A family. Methionine aminopeptidase eukaryotic type 2 subfamily. The cofactor is Co(2+). It depends on Zn(2+) as a cofactor. Mn(2+) serves as cofactor. Requires Fe(2+) as cofactor.

It is found in the cytoplasm. The enzyme catalyses Release of N-terminal amino acids, preferentially methionine, from peptides and arylamides.. Functionally, cotranslationally removes the N-terminal methionine from nascent proteins. The N-terminal methionine is often cleaved when the second residue in the primary sequence is small and uncharged (Met-Ala-, Cys, Gly, Pro, Ser, Thr, or Val). The sequence is that of Methionine aminopeptidase 2 from Schizophyllum commune (strain H4-8 / FGSC 9210) (Split gill fungus).